The chain runs to 167 residues: MATQSKKTLYDFTVKDAKGNDVDLSVYKGKVVLIVNVASKCGLTNNSYDELNQIYLKYKEKGFEILAFPCNQFGQQEPGTNEEIVDFVCTKFKSEFPIFDKIDVNGENAAPVYEFLKTGFYGILGGDIQWNFSKFLVDKNGQPVDCYYPTTSPLTVERDIQKLLGLL.

Cysteine 41 is a catalytic residue.

Belongs to the glutathione peroxidase family.

It carries out the reaction 2 glutathione + H2O2 = glutathione disulfide + 2 H2O. In terms of biological role, may constitute a glutathione peroxidase-like protective system against oxidative stresses. The chain is Glutathione peroxidase 1 (GPXHA-1) from Helianthus annuus (Common sunflower).